The chain runs to 105 residues: Nucleoid-associated protein PTH_0052 (105 aa).

The protein belongs to the YbaB/EbfC family. Homodimer.

The protein resides in the cytoplasm. It is found in the nucleoid. Its function is as follows. Binds to DNA and alters its conformation. May be involved in regulation of gene expression, nucleoid organization and DNA protection. This is Nucleoid-associated protein PTH_0052 from Pelotomaculum thermopropionicum (strain DSM 13744 / JCM 10971 / SI).